We begin with the raw amino-acid sequence, 169 residues long: Disulfide bond formation protein B 1 (169 aa).

Over 1–13 (MSALLKPLDNRLF) the chain is Cytoplasmic. Residues 14–30 (WPAVAIGGLLILAFVLY) traverse the membrane as a helical segment. Topologically, residues 31-48 (LQHVRGFAPCSLCIFIRL) are periplasmic. Cysteine 40 and cysteine 43 are disulfide-bonded. A helical membrane pass occupies residues 49–64 (DVLGLVLAGIVGSLAP). Over 65 to 71 (RSRIAGG) the chain is Cytoplasmic. A helical transmembrane segment spans residues 72–89 (IAALGMLAASLGGIYHAW). The Periplasmic portion of the chain corresponds to 90-145 (SLVAEEKLAAQGMGSCKMFMGFPEWIPLDTWLPQVFQPEGLCGEVVWTLLGQSMAV). Cysteines 105 and 131 form a disulfide. Residues 146–164 (WSLALFVFCLLVLAAKLAF) form a helical membrane-spanning segment. The Cytoplasmic segment spans residues 165 to 169 (GRRTA).

It belongs to the DsbB family.

It localises to the cell inner membrane. Its function is as follows. Required for disulfide bond formation in some periplasmic proteins. Acts by oxidizing the DsbA protein. The protein is Disulfide bond formation protein B 1 of Pseudomonas aeruginosa (strain UCBPP-PA14).